The following is a 161-amino-acid chain: Probable endopeptidase HI_1314 (161 aa).

An N-terminal signal peptide occupies residues 1–18 (MKVYKSFLIATASLFLFA). Cysteine 19 carries the N-palmitoyl cysteine lipid modification. Cysteine 19 is lipidated: S-diacylglycerol cysteine. The region spanning 39 to 161 (IMAIAMLSEQ…SKAFWQVRRI (123 aa)) is the NlpC/P60 domain. The active-site Nucleophile is the cysteine 69. The active-site Proton acceptor is the histidine 122. Histidine 134 is an active-site residue.

Belongs to the peptidase C40 family.

The protein localises to the cell membrane. In Haemophilus influenzae (strain ATCC 51907 / DSM 11121 / KW20 / Rd), this protein is Probable endopeptidase HI_1314.